A 297-amino-acid polypeptide reads, in one-letter code: Protein phosphatase PTC7 homolog (297 aa).

The N-terminal 27 residues, 1–27 (MLSVLSYGRLVARAVIGGLSQTDSRDY), are a transit peptide targeting the mitochondrion. Residues 28-292 (SLVSASFGFG…DDITVLLSIV (265 aa)) enclose the PPM-type phosphatase domain. Mn(2+)-binding residues include D71, G72, and D216.

This sequence belongs to the PP2C family. It depends on Mg(2+) as a cofactor. Mn(2+) serves as cofactor.

It localises to the mitochondrion matrix. The enzyme catalyses O-phospho-L-seryl-[protein] + H2O = L-seryl-[protein] + phosphate. It catalyses the reaction O-phospho-L-threonyl-[protein] + H2O = L-threonyl-[protein] + phosphate. Functionally, protein phosphatase which positively regulates biosynthesis of the ubiquinone, coenzyme Q. Dephosphorylates the ubiquinone biosynthesis protein coq7 which is likely to lead to its activation. This is Protein phosphatase PTC7 homolog (pptc7) from Danio rerio (Zebrafish).